The following is an 89-amino-acid chain: Small ribosomal subunit protein uS14A (89 aa).

It belongs to the universal ribosomal protein uS14 family. As to quaternary structure, part of the 30S ribosomal subunit. Contacts proteins S3 and S10.

In terms of biological role, binds 16S rRNA, required for the assembly of 30S particles and may also be responsible for determining the conformation of the 16S rRNA at the A site. The protein is Small ribosomal subunit protein uS14A of Lacticaseibacillus paracasei (strain ATCC 334 / BCRC 17002 / CCUG 31169 / CIP 107868 / KCTC 3260 / NRRL B-441) (Lactobacillus paracasei).